The primary structure comprises 733 residues: Phosphoribosylformylglycinamidine synthase subunit PurL (733 aa).

The active site involves His-32. Tyr-35 lines the ATP pocket. Glu-81 provides a ligand contact to Mg(2+). Substrate is bound by residues 82 to 85 and Arg-104; that span reads SHNH. His-83 acts as the Proton acceptor in catalysis. Asp-105 serves as a coordination point for Mg(2+). Gln-230 contributes to the substrate binding site. Asp-258 serves as a coordination point for Mg(2+). Position 301 to 303 (301 to 303) interacts with substrate; that stretch reads ESQ. 2 residues coordinate ATP: Asp-482 and Gly-519. Asn-520 is a Mg(2+) binding site. Ser-522 provides a ligand contact to substrate.

Belongs to the FGAMS family. In terms of assembly, monomer. Part of the FGAM synthase complex composed of 1 PurL, 1 PurQ and 2 PurS subunits.

The protein localises to the cytoplasm. The enzyme catalyses N(2)-formyl-N(1)-(5-phospho-beta-D-ribosyl)glycinamide + L-glutamine + ATP + H2O = 2-formamido-N(1)-(5-O-phospho-beta-D-ribosyl)acetamidine + L-glutamate + ADP + phosphate + H(+). The protein operates within purine metabolism; IMP biosynthesis via de novo pathway; 5-amino-1-(5-phospho-D-ribosyl)imidazole from N(2)-formyl-N(1)-(5-phospho-D-ribosyl)glycinamide: step 1/2. Its function is as follows. Part of the phosphoribosylformylglycinamidine synthase complex involved in the purines biosynthetic pathway. Catalyzes the ATP-dependent conversion of formylglycinamide ribonucleotide (FGAR) and glutamine to yield formylglycinamidine ribonucleotide (FGAM) and glutamate. The FGAM synthase complex is composed of three subunits. PurQ produces an ammonia molecule by converting glutamine to glutamate. PurL transfers the ammonia molecule to FGAR to form FGAM in an ATP-dependent manner. PurS interacts with PurQ and PurL and is thought to assist in the transfer of the ammonia molecule from PurQ to PurL. This Methanocaldococcus jannaschii (strain ATCC 43067 / DSM 2661 / JAL-1 / JCM 10045 / NBRC 100440) (Methanococcus jannaschii) protein is Phosphoribosylformylglycinamidine synthase subunit PurL.